The chain runs to 207 residues: Octanoyltransferase (207 aa).

One can recognise a BPL/LPL catalytic domain in the interval 27–202 (GETPDELWIV…HLETRLARPQ (176 aa)). Substrate-binding positions include 66-73 (RGGQITYH), 133-135 (SLG), and 146-148 (GLS). Cys-164 serves as the catalytic Acyl-thioester intermediate.

This sequence belongs to the LipB family.

Its subcellular location is the cytoplasm. It catalyses the reaction octanoyl-[ACP] + L-lysyl-[protein] = N(6)-octanoyl-L-lysyl-[protein] + holo-[ACP] + H(+). It participates in protein modification; protein lipoylation via endogenous pathway; protein N(6)-(lipoyl)lysine from octanoyl-[acyl-carrier-protein]: step 1/2. In terms of biological role, catalyzes the transfer of endogenously produced octanoic acid from octanoyl-acyl-carrier-protein onto the lipoyl domains of lipoate-dependent enzymes. Lipoyl-ACP can also act as a substrate although octanoyl-ACP is likely to be the physiological substrate. This is Octanoyltransferase from Laribacter hongkongensis (strain HLHK9).